We begin with the raw amino-acid sequence, 225 residues long: Deoxyribose-phosphate aldolase (225 aa).

The active-site Proton donor/acceptor is Asp94. Lys158 acts as the Schiff-base intermediate with acetaldehyde in catalysis. Residue Lys187 is the Proton donor/acceptor of the active site.

This sequence belongs to the DeoC/FbaB aldolase family. DeoC type 1 subfamily.

It is found in the cytoplasm. The enzyme catalyses 2-deoxy-D-ribose 5-phosphate = D-glyceraldehyde 3-phosphate + acetaldehyde. It functions in the pathway carbohydrate degradation; 2-deoxy-D-ribose 1-phosphate degradation; D-glyceraldehyde 3-phosphate and acetaldehyde from 2-deoxy-alpha-D-ribose 1-phosphate: step 2/2. Catalyzes a reversible aldol reaction between acetaldehyde and D-glyceraldehyde 3-phosphate to generate 2-deoxy-D-ribose 5-phosphate. The chain is Deoxyribose-phosphate aldolase from Thermococcus gammatolerans (strain DSM 15229 / JCM 11827 / EJ3).